Reading from the N-terminus, the 315-residue chain is DNA-directed RNA polymerase subunit alpha (315 aa).

An alpha N-terminal domain (alpha-NTD) region spans residues 1–229 (MLDSKLKAPV…EHLTYFSNPQ (229 aa)). The segment at 247 to 315 (EQEEELDLPL…LEKKGFTLKE (69 aa)) is alpha C-terminal domain (alpha-CTD).

The protein belongs to the RNA polymerase alpha chain family. Homodimer. The RNAP catalytic core consists of 2 alpha, 1 beta, 1 beta' and 1 omega subunit. When a sigma factor is associated with the core the holoenzyme is formed, which can initiate transcription.

The catalysed reaction is RNA(n) + a ribonucleoside 5'-triphosphate = RNA(n+1) + diphosphate. DNA-dependent RNA polymerase catalyzes the transcription of DNA into RNA using the four ribonucleoside triphosphates as substrates. This is DNA-directed RNA polymerase subunit alpha from Thermus thermophilus (strain ATCC BAA-163 / DSM 7039 / HB27).